A 249-amino-acid polypeptide reads, in one-letter code: Probable transcriptional regulatory protein Csal_1845 (249 aa).

It belongs to the TACO1 family.

It localises to the cytoplasm. This Chromohalobacter salexigens (strain ATCC BAA-138 / DSM 3043 / CIP 106854 / NCIMB 13768 / 1H11) protein is Probable transcriptional regulatory protein Csal_1845.